The chain runs to 289 residues: Thioredoxin-like protein 1 (289 aa).

The Thioredoxin domain maps to 2–109 (VGVKPVGSDP…EEKIKQHLEN (108 aa)). An intrachain disulfide couples C34 to C37. S113 carries the phosphoserine modification. Residues 115 to 285 (EDTDIPKGYM…NDFKRVVGKK (171 aa)) form the PITH domain.

In terms of assembly, component of the 19S regulatory cap of the 26S proteasome. Interacts with PSMD14/RPN11. Interacts with, and reduces EEF1A1.

It is found in the cytoplasm. The protein resides in the nucleus. Functionally, active thioredoxin with a redox potential of about -250 mV. The chain is Thioredoxin-like protein 1 (Txnl1) from Rattus norvegicus (Rat).